The chain runs to 427 residues: Enolase (427 aa).

Gln-163 provides a ligand contact to (2R)-2-phosphoglycerate. Residue Glu-205 is the Proton donor of the active site. Residues Asp-242, Glu-285, and Asp-312 each contribute to the Mg(2+) site. The (2R)-2-phosphoglycerate site is built by Lys-337, Arg-366, Ser-367, and Lys-388. The Proton acceptor role is filled by Lys-337.

This sequence belongs to the enolase family. The cofactor is Mg(2+).

It is found in the cytoplasm. The protein resides in the secreted. It localises to the cell surface. It catalyses the reaction (2R)-2-phosphoglycerate = phosphoenolpyruvate + H2O. Its pathway is carbohydrate degradation; glycolysis; pyruvate from D-glyceraldehyde 3-phosphate: step 4/5. Catalyzes the reversible conversion of 2-phosphoglycerate (2-PG) into phosphoenolpyruvate (PEP). It is essential for the degradation of carbohydrates via glycolysis. In Paraburkholderia phymatum (strain DSM 17167 / CIP 108236 / LMG 21445 / STM815) (Burkholderia phymatum), this protein is Enolase.